Reading from the N-terminus, the 294-residue chain is F-box protein SKIP3 (294 aa).

Positions 21-67 (SSTLDSLPEGCISNIISFTSPEDACVAAAVSKIFESAVKSDIVWEKF) constitute an F-box domain.

As to quaternary structure, part of a SCF (SKP1-cullin-F-box) protein ligase complex. Interacts with SKP1A/ASK1.

It functions in the pathway protein modification; protein ubiquitination. In Arabidopsis thaliana (Mouse-ear cress), this protein is F-box protein SKIP3 (SKIP3).